We begin with the raw amino-acid sequence, 118 residues long: MHEYSIVASLIQMCESHAKEHNAASIAKVCIAVGERSGVDSALVKSAFETFRLDSPLCQNTILEIQSQSVELECRDCGHYFQAQNLTYSTCPQCQSHNVIIAKGKELHLLSLELDIQS.

Ni(2+) is bound at residue H2. C74, C77, C91, and C94 together coordinate Zn(2+).

Belongs to the HypA/HybF family.

Involved in the maturation of [NiFe] hydrogenases. Required for nickel insertion into the metal center of the hydrogenase. The sequence is that of Hydrogenase maturation factor HypA from Helicobacter hepaticus (strain ATCC 51449 / 3B1).